A 179-amino-acid polypeptide reads, in one-letter code: Large ribosomal subunit protein uL10 (179 aa).

The protein belongs to the universal ribosomal protein uL10 family. Part of the ribosomal stalk of the 50S ribosomal subunit. The N-terminus interacts with L11 and the large rRNA to form the base of the stalk. The C-terminus forms an elongated spine to which L12 dimers bind in a sequential fashion forming a multimeric L10(L12)X complex.

Functionally, forms part of the ribosomal stalk, playing a central role in the interaction of the ribosome with GTP-bound translation factors. The protein is Large ribosomal subunit protein uL10 of Thermotoga neapolitana (strain ATCC 49049 / DSM 4359 / NBRC 107923 / NS-E).